A 117-amino-acid chain; its full sequence is Large ribosomal subunit protein bL19 (117 aa).

This sequence belongs to the bacterial ribosomal protein bL19 family.

Functionally, this protein is located at the 30S-50S ribosomal subunit interface and may play a role in the structure and function of the aminoacyl-tRNA binding site. The chain is Large ribosomal subunit protein bL19 from Exiguobacterium sibiricum (strain DSM 17290 / CCUG 55495 / CIP 109462 / JCM 13490 / 255-15).